The following is a 140-amino-acid chain: Nucleoside diphosphate kinase (140 aa).

The ATP site is built by lysine 11, phenylalanine 59, arginine 87, threonine 93, arginine 104, and asparagine 114. Histidine 117 functions as the Pros-phosphohistidine intermediate in the catalytic mechanism.

It belongs to the NDK family. In terms of assembly, homotetramer. Mg(2+) is required as a cofactor.

Its subcellular location is the cytoplasm. It catalyses the reaction a 2'-deoxyribonucleoside 5'-diphosphate + ATP = a 2'-deoxyribonucleoside 5'-triphosphate + ADP. The enzyme catalyses a ribonucleoside 5'-diphosphate + ATP = a ribonucleoside 5'-triphosphate + ADP. In terms of biological role, major role in the synthesis of nucleoside triphosphates other than ATP. The ATP gamma phosphate is transferred to the NDP beta phosphate via a ping-pong mechanism, using a phosphorylated active-site intermediate. The polypeptide is Nucleoside diphosphate kinase (Rickettsia bellii (strain OSU 85-389)).